A 704-amino-acid polypeptide reads, in one-letter code: Elongation factor G (704 aa).

The tr-type G domain occupies 8-291; it reads VRYRNIGISA…AVVEYLPSPS (284 aa). GTP is bound by residues 17–24, 88–92, and 142–145; these read AHIDAGKT, DTPGH, and NKMD.

It belongs to the TRAFAC class translation factor GTPase superfamily. Classic translation factor GTPase family. EF-G/EF-2 subfamily.

The protein localises to the cytoplasm. In terms of biological role, catalyzes the GTP-dependent ribosomal translocation step during translation elongation. During this step, the ribosome changes from the pre-translocational (PRE) to the post-translocational (POST) state as the newly formed A-site-bound peptidyl-tRNA and P-site-bound deacylated tRNA move to the P and E sites, respectively. Catalyzes the coordinated movement of the two tRNA molecules, the mRNA and conformational changes in the ribosome. This Blochmanniella pennsylvanica (strain BPEN) protein is Elongation factor G.